Reading from the N-terminus, the 399-residue chain is Phosphoglycerate kinase (399 aa).

Residues 22 to 24 (DFN), Arg-38, 61 to 64 (HLGR), Arg-120, and Arg-153 contribute to the substrate site. Residues Lys-204, Glu-326, and 352 to 355 (GGDT) contribute to the ATP site.

Belongs to the phosphoglycerate kinase family. In terms of assembly, monomer.

It localises to the cytoplasm. It catalyses the reaction (2R)-3-phosphoglycerate + ATP = (2R)-3-phospho-glyceroyl phosphate + ADP. The protein operates within carbohydrate degradation; glycolysis; pyruvate from D-glyceraldehyde 3-phosphate: step 2/5. The protein is Phosphoglycerate kinase of Pelobacter propionicus (strain DSM 2379 / NBRC 103807 / OttBd1).